Consider the following 181-residue polypeptide: Translationally-controlled tumor protein homolog (181 aa).

One can recognise a TCTP domain in the interval 1–181 (MLIYKDIFTD…VKEAILEEKC (181 aa)).

Belongs to the TCTP family.

Its subcellular location is the cytoplasm. Involved in calcium binding and microtubule stabilization. The sequence is that of Translationally-controlled tumor protein homolog (tct-1) from Caenorhabditis briggsae.